The sequence spans 254 residues: Triosephosphate isomerase (254 aa).

10–12 provides a ligand contact to substrate; sequence NWK. His-99 functions as the Electrophile in the catalytic mechanism. Glu-169 acts as the Proton acceptor in catalysis. Residues Gly-175, Ser-215, and 236-237 contribute to the substrate site; that span reads GG.

This sequence belongs to the triosephosphate isomerase family. Homodimer.

The protein localises to the cytoplasm. It catalyses the reaction D-glyceraldehyde 3-phosphate = dihydroxyacetone phosphate. It participates in carbohydrate biosynthesis; gluconeogenesis. It functions in the pathway carbohydrate degradation; glycolysis; D-glyceraldehyde 3-phosphate from glycerone phosphate: step 1/1. Its function is as follows. Involved in the gluconeogenesis. Catalyzes stereospecifically the conversion of dihydroxyacetone phosphate (DHAP) to D-glyceraldehyde-3-phosphate (G3P). This is Triosephosphate isomerase from Chlamydia abortus (strain DSM 27085 / S26/3) (Chlamydophila abortus).